Here is a 355-residue protein sequence, read N- to C-terminus: Peptide chain release factor 1 (355 aa).

Position 233 is an N5-methylglutamine (Q233). A compositionally biased stretch (basic and acidic residues) spans 283 to 293 (EKNKDRADARK). Residues 283–304 (EKNKDRADARKSQVGTGDRSER) form a disordered region.

Belongs to the prokaryotic/mitochondrial release factor family. In terms of processing, methylated by PrmC. Methylation increases the termination efficiency of RF1.

It is found in the cytoplasm. Peptide chain release factor 1 directs the termination of translation in response to the peptide chain termination codons UAG and UAA. The sequence is that of Peptide chain release factor 1 from Finegoldia magna (strain ATCC 29328 / DSM 20472 / WAL 2508) (Peptostreptococcus magnus).